Reading from the N-terminus, the 361-residue chain is tRNA-specific 2-thiouridylase MnmA (361 aa).

ATP contacts are provided by residues 11 to 18 (GMSGGVDS) and M37. Positions 97 to 99 (NPD) are interaction with target base in tRNA. Residue C102 is the Nucleophile of the active site. Cysteines 102 and 199 form a disulfide. ATP is bound at residue G126. The segment at 149 to 151 (KDQ) is interaction with tRNA. Catalysis depends on C199, which acts as the Cysteine persulfide intermediate. The segment at 311–312 (RY) is interaction with tRNA.

Belongs to the MnmA/TRMU family.

Its subcellular location is the cytoplasm. It catalyses the reaction S-sulfanyl-L-cysteinyl-[protein] + uridine(34) in tRNA + AH2 + ATP = 2-thiouridine(34) in tRNA + L-cysteinyl-[protein] + A + AMP + diphosphate + H(+). Catalyzes the 2-thiolation of uridine at the wobble position (U34) of tRNA, leading to the formation of s(2)U34. The sequence is that of tRNA-specific 2-thiouridylase MnmA from Cupriavidus necator (strain ATCC 17699 / DSM 428 / KCTC 22496 / NCIMB 10442 / H16 / Stanier 337) (Ralstonia eutropha).